The chain runs to 276 residues: NH(3)-dependent NAD(+) synthetase (276 aa).

An ATP-binding site is contributed by 43 to 50 (GISGGVDS). Residue aspartate 49 participates in Mg(2+) binding. Position 146 (arginine 146) interacts with deamido-NAD(+). An ATP-binding site is contributed by threonine 166. Glutamate 171 contributes to the Mg(2+) binding site. The deamido-NAD(+) site is built by lysine 179 and aspartate 186. Residues lysine 195 and threonine 217 each contribute to the ATP site. Deamido-NAD(+) is bound at residue 266–267 (HK).

This sequence belongs to the NAD synthetase family. In terms of assembly, homodimer.

It carries out the reaction deamido-NAD(+) + NH4(+) + ATP = AMP + diphosphate + NAD(+) + H(+). Its pathway is cofactor biosynthesis; NAD(+) biosynthesis; NAD(+) from deamido-NAD(+) (ammonia route): step 1/1. Catalyzes the ATP-dependent amidation of deamido-NAD to form NAD. Uses ammonia as a nitrogen source. This is NH(3)-dependent NAD(+) synthetase from Aliivibrio salmonicida (strain LFI1238) (Vibrio salmonicida (strain LFI1238)).